Here is a 71-residue protein sequence, read N- to C-terminus: Protein KleB (71 aa).

A DNA-binding region (H-T-H motif) is located at residues 9–28 (IETCCRRCGKSIRTLSHTII).

In Escherichia coli, this protein is Protein KleB (kleB).